We begin with the raw amino-acid sequence, 39 residues long: Antimicrobial peptide CHP1 (39 aa).

3 disulfide bridges follow: Cys-6-Cys-28, Cys-13-Cys-34, and Cys-18-Cys-35.

Bactericidal activity; inhibits S.aureus and E.coli. This is Antimicrobial peptide CHP1 from Gallus gallus (Chicken).